Consider the following 3165-residue polypeptide: MTDKSIVILSLMVFHSSFINGKTCRRQLVEEWHPQPSSYVVNWTLTENICLDFYRDCWFLGVNTKIDTSGNQAVPQICPLQIQLGDILVISSEPSLQFPEINLMNVSETSFVGCVQNTTTEDQLLFGCRLKGMHTVNSKWLSVGTHYFITVMASGPSPCPLGLRLNVTVKQQFCQESLSSEFCSGHGKCLSEAWSKTYSCHCQPPFSGKYCQELDACSFKPCKNNGSCINKRENWDEQAYECVCHPPFTGKNCSEIIGQCQPHVCFHGNCSNITSNSFICECDEQFSGPFCEVSAKPCVSLLFWKRGICPNSSSAYTYECPKGSSSQNGETDVSEFSLVPCQNGTDCIKISNDVMCICSPIFTDLLCKSIQTSCESFPLRNNATCKKCEKDYPCSCISGFTEKNCEKAIDHCKLLSINCLNEEWCFNIIGRFKYVCIPGCTKNPCWFLKNVYLIHQHLCYCGVTFHGICQDKGPAQFEYVWQLGFAGSEGEKCQGVIDAYFFLAANCTEDATYVNDPEDNNSSCWFPHEGTKEICANGCSCLSEEDSQEYRYLCFLRWAGNMYLENTTDDQENECQHEAVCKDEINRPRCSCSLSYIGRLCVVNVDYCLGNHSISVHGLCLALSHNCNCSGLQRYERNICEIDTEDCKSASCKNGTTSTHLRGYFFRKCVPGFKGTQCEIDIDECASHPCKNGATCIDQPGNYFCQCVPPFKVVDGFSCLCNPGYVGIRCEQDIDDCILNACEHNSTCKDLHLSYQCVCLSDWEGNFCEQESNECKMNPCKNNSTCTDLYKSYRCECTSGWTGQNCSEEINECDSDPCMNGGLCHESTIPGQFVCLCPPLYTGQFCHQRYNLCDLLHNPCRNNSTCLALVDANQHCICREEFEGKNCEIDVKDCLFLSCQDYGDCEDMVNNFRCICRPGFSGSLCEIEINECSSEPCKNNGTCVDLTNRFFCNCEPEYHGPFCELDVNKCKISPCLDEENCVYRTDGYNCLCAPGYTGINCEINLDECLSEPCLHDGVCIDGINHYTCDCKSGFFGTHCETNANDCLSNPCLHGRCTELINEYPCSCDADGTSTQCKIKINDCTSIPCMNEGFCQKSAHGFTCICPRGYTGAYCEKSIDNCAEPELNSVICLNGGICVDGPGHTFDCRCLPGFSGQFCEININECSSSPCLHGADCEDHINGYVCKCQPGWSGHHCENELECIPNSCVHELCMENEPGSTCLCTPGFMTCSIGLLCGDEIRRITCLTPIFQRTDPISTQTYTIPPSETLVSSFPSIKATRIPAIMDTYPVDQGPKQTGIVKHDILPTTGLATLRISTPLESYLLQELIVTRELSAKHSLLSSADVSSSRFLNFGIRDPAQIVQDKTSVSHMPIRTSAATLGFFFPDRRARTPFIMSSLMSDFIFPTQSLLFENCQTVALSATPTTSVIRSIPGADIELNRQSLLSRGFLLIAASISATPVVSRGAQEDIEEYSADSLISRREHWRLLSPSMSPIFPAKVIISKQVTILNSSALHRFSTKAFNPSEYQAITEASSNQRLTNIKSQAADSLRELSQTCATCSMTEIKSSREFSDQVLHSKQSHFYETFWMNSAILASWYALMGAQTITSGHSFSSATEITPSVAFTEVPSLFPSKKSAKRTILSSSLEESITLSSNLDVNLCLDKTCLSIVPSQTISSDLMNSDLTSKMTTDELSVSENILKLLKIRQYGITMGPTEVLNQESLLDMEKSKGSHTLFKLHPSDSSLDFELNLQIYPDVTLKTYSEITHANDFKNNLPPLTGSVPDFSEVTTNVAFYTVSATPALSIQTSSSMSVIRPDWPYFTDYMTSLKKEVKTSSEWSKWELQPSVQYQEFPTASRHLPFTRSLTLSSLESILAPQRLMISDFSCVRYYGDSYLEFQNVALNPQNNISLEFQTFSSYGLLLYVKQDSNLVDGFFIQLFIENGTLKYHFYCPGEAKFKSINTTVRVDNGQKYTLLIRQELDPCNAELTILGRNTQICESINHVLGKPLPKSGSVFIGGFPDLHGKIQMPVPVKNFTGCIEVIEINNWRSFIPSKAVKNYHINNCRSQGFMLSPTASFVDASDVTQGVDTMWTSVSPSVAAPSVCQQDVCHNGGTCHAIFLSSGIVSFQCDCPLHFTGRFCEKDAGLFFPSFNGNSYLELPFLKFVLEKEHNRTVTIYLTIKTNSLNGTILYSNGNNCGKQFLHLFLVEGRPSVKYGCGNSQNILTVSANYSINTNAFTPITIRYTTPVGSPGVVCMIEMTADGKPPVQKKDTEISHASQAYFESMFLGHIPANVQIHKKAGPVYGFRGCILDLQVNNKEFFIIDEARHGKNIENCHVPWCAHHLCRNNGTCISDNENLFCECPRLYSGKLCQFASCENNPCGNGATCVPKSGTDIVCLCPYGRSGPLCTDAINITQPRFSGTDAFGYTSFLAYSRISDISFHYEFHLKFQLANNHSALQNNLIFFTGQKGHGLNGDDFLAVGLLNGSVVYSYNLGSGIASIRSEPLNLSLGVHTVHLGKFFQEGWLKVDDHKNKSIIAPGRLVGLNVFSQFYVGGYSEYTPDLLPNGADFKNGFQGCIFTLQVRTEKDGHFRGLGNPEGHPNAGRSVGQCHASPCSLMKCGNGGTCIESGTSVYCNCTTGWKGSFCTETVSTCDPEHDPPHHCSRGATCISLPHGYTCFCPLGTTGIYCEQALILIVILEKPKPAERKVKKEALSISDPSFRSNELSWMSFASFHVRKKTHIQLQFQPLAADGILFYAAQHLKAQSGDFLCISLVNSSVQLRYNLGDRTIILETLQKVTINGSTWHIIKAGRVGAEGYLDLDGINVTEKASTKMSSLDTNTDFYIGGVSSLNLVNPMAIENEPVGFQGCIRQVIINNQELQLTEFGAKGGSNVGDCDGTACGYNTCRNGGECTVNGTTFSCRCLPDWAGNTCNQSVSCLNNLCLHQSLCIPDQSFSYSCLCTLGWVGRYCENKTSFSTAKFMGNSYIKYIDPNYRMRNLQFTTISLNFSTTKTEGLIVWMGIAQNEENDFLAIGLHNQTLKIAVNLGERISVPMSYNNGTFCCNKWHHVVVIQNQTLIKAYINNSLILSEDIDPHKNFVALNYDGICYLGGFEYGRKVNIVTQEIFKTNFVGKIKDVVFFQEPKNIELIKLEGYNVYDGDEQNEVT.

A signal peptide spans 1 to 21 (MTDKSIVILSLMVFHSSFING). An N-linked (GlcNAc...) asparagine glycan is attached at Asn-166. 3 consecutive EGF-like domains span residues 170 to 212 (KQQF…KYCQ), 213 to 254 (ELDA…KNCS), and 256 to 292 (IIGQ…PFCE). 9 cysteine pairs are disulfide-bonded: Cys-174–Cys-189, Cys-183–Cys-200, Cys-202–Cys-211, Cys-217–Cys-228, Cys-222–Cys-242, Cys-244–Cys-253, Cys-260–Cys-270, Cys-265–Cys-280, and Cys-282–Cys-291. Asn-269 and Asn-272 each carry an N-linked (GlcNAc...) asparagine glycan. N-linked (GlcNAc...) asparagine glycosylation is found at Asn-311 and Asn-343. 2 consecutive EGF-like domains span residues 332-368 (DVSE…LLCK) and 370-406 (IQTS…KNCE). Cystine bridges form between Cys-341/Cys-356, Cys-358/Cys-367, Cys-374/Cys-385, and Cys-396/Cys-405. N-linked (GlcNAc...) asparagine glycosylation is found at Asn-506 and Asn-566. EGF-like domains lie at 567-602 (TTDD…RLCV) and 643-679 (DTED…TQCE). 46 disulfide bridges follow: Cys-575-Cys-590, Cys-592-Cys-601, Cys-669-Cys-678, Cys-685-Cys-696, Cys-690-Cys-705, Cys-707-Cys-719, Cys-737-Cys-748, Cys-742-Cys-757, Cys-759-Cys-768, Cys-775-Cys-786, Cys-780-Cys-795, Cys-797-Cys-806, Cys-813-Cys-824, Cys-818-Cys-835, Cys-837-Cys-846, Cys-853-Cys-866, Cys-860-Cys-876, Cys-878-Cys-887, Cys-894-Cys-905, Cys-899-Cys-914, Cys-916-Cys-925, Cys-932-Cys-943, Cys-937-Cys-952, Cys-954-Cys-963, Cys-970-Cys-981, Cys-975-Cys-990, Cys-992-Cys-1001, Cys-1008-Cys-1019, Cys-1013-Cys-1028, Cys-1030-Cys-1039, Cys-1046-Cys-1056, Cys-1051-Cys-1065, Cys-1067-Cys-1076, Cys-1083-Cys-1094, Cys-1088-Cys-1103, Cys-1105-Cys-1114, Cys-1121-Cys-1137, Cys-1131-Cys-1147, Cys-1149-Cys-1158, Cys-1165-Cys-1176, Cys-1170-Cys-1185, Cys-1187-Cys-1196, Cys-2037-Cys-2063, Cys-2103-Cys-2114, Cys-2108-Cys-2128, and Cys-2130-Cys-2139. In terms of domain architecture, EGF-like 8; calcium-binding spans 681 to 720 (DIDECASHPCKNGATCIDQPGNYFCQCVPPFKVVDGFSCL). The EGF-like 9; calcium-binding domain occupies 733–769 (DIDDCILNACEHNSTCKDLHLSYQCVCLSDWEGNFCE). The EGF-like 10; calcium-binding domain maps to 771–807 (ESNECKMNPCKNNSTCTDLYKSYRCECTSGWTGQNCS). EGF-like domains lie at 809–847 (EINE…QFCH), 849–888 (RYNL…KNCE), and 890–926 (DVKD…SLCE). The EGF-like 14; calcium-binding domain maps to 928–964 (EINECSSEPCKNNGTCVDLTNRFFCNCEPEYHGPFCE). One can recognise an EGF-like 15 domain in the interval 966-1002 (DVNKCKISPCLDEENCVYRTDGYNCLCAPGYTGINCE). One can recognise an EGF-like 16; calcium-binding domain in the interval 1004–1040 (NLDECLSEPCLHDGVCIDGINHYTCDCKSGFFGTHCE). EGF-like domains follow at residues 1042-1077 (NAND…TQCK), 1079-1115 (KIND…AYCE), and 1117-1159 (SIDN…QFCE). The 37-residue stretch at 1161–1197 (NINECSSSPCLHGADCEDHINGYVCKCQPGWSGHHCE) folds into the EGF-like 20; calcium-binding domain. The Laminin G-like 1 domain maps to 1883–2063 (FSCVRYYGDS…AVKNYHINNC (181 aa)). The region spanning 2099 to 2140 (APSVCQQDVCHNGGTCHAIFLSSGIVSFQCDCPLHFTGRFCE) is the EGF-like 21 domain. Residues 2145–2339 (LFFPSFNGNS…NIENCHVPWC (195 aa)) enclose the Laminin G-like 2 domain. Asn-2170 carries N-linked (GlcNAc...) asparagine glycosylation. EGF-like domains follow at residues 2335 to 2368 (HVPW…YSGK) and 2371 to 2408 (QFAS…PLCT). Intrachain disulfides connect Cys-2339-Cys-2350, Cys-2344-Cys-2359, Cys-2375-Cys-2386, Cys-2380-Cys-2396, Cys-2398-Cys-2407, Cys-2576-Cys-2609, Cys-2614-Cys-2625, Cys-2619-Cys-2634, Cys-2636-Cys-2645, Cys-2652-Cys-2668, Cys-2662-Cys-2677, Cys-2679-Cys-2688, Cys-2868-Cys-2895, Cys-2900-Cys-2911, Cys-2905-Cys-2920, Cys-2922-Cys-2931, Cys-2937-Cys-2948, Cys-2942-Cys-2958, and Cys-2960-Cys-2969. The region spanning 2419–2609 (SGTDAFGYTS…PNAGRSVGQC (191 aa)) is the Laminin G-like 3 domain. EGF-like domains follow at residues 2610 to 2646 (HASP…SFCT) and 2648 to 2689 (TVST…IYCE). Residues 2717–2895 (DPSFRSNELS…AKGGSNVGDC (179 aa)) enclose the Laminin G-like 4 domain. EGF-like domains lie at 2896–2932 (DGTA…NTCN) and 2933–2970 (QSVS…RYCE). Positions 2975–3165 (FSTAKFMGNS…YDGDEQNEVT (191 aa)) constitute a Laminin G-like 5 domain.

It belongs to the EYS family. Expressed in retina (at protein level). Isoform 1: Detected in retina. Isoform 2: Detected in retina. Isoform 3: Strongly expressed in retina and testis. Isoform 4: Strongly expressed in testis, and weakly expressed in retina.

It localises to the cell projection. It is found in the cilium. The protein localises to the photoreceptor outer segment. Its subcellular location is the cytoplasm. The protein resides in the cytoskeleton. It localises to the cilium axoneme. It is found in the microtubule organizing center. The protein localises to the centrosome. Its subcellular location is the secreted. The protein resides in the extracellular space. It localises to the extracellular matrix. It is found in the interphotoreceptor matrix. Functionally, required to maintain the integrity of photoreceptor cells. Specifically required for normal morphology of the photoreceptor ciliary pocket, and might thus facilitate protein trafficking between the photoreceptor inner and outer segments via the transition zone. The protein is Protein eyes shut homolog (EYS) of Homo sapiens (Human).